A 247-amino-acid polypeptide reads, in one-letter code: Probable dihydroorotate dehydrogenase B (NAD(+)), electron transfer subunit (247 aa).

Residues M1–E87 enclose the FAD-binding FR-type domain. [2Fe-2S] cluster-binding residues include C200, C205, C208, and C216.

It belongs to the PyrK family. As to quaternary structure, heterotetramer of 2 PyrK and 2 PyrD type B subunits. The cofactor is [2Fe-2S] cluster. It depends on FAD as a cofactor.

It participates in pyrimidine metabolism; UMP biosynthesis via de novo pathway; orotate from (S)-dihydroorotate (NAD(+) route): step 1/1. Functionally, responsible for channeling the electrons from the oxidation of dihydroorotate from the FMN redox center in the PyrD type B subunit to the ultimate electron acceptor NAD(+). The protein is Probable dihydroorotate dehydrogenase B (NAD(+)), electron transfer subunit of Pyrococcus horikoshii (strain ATCC 700860 / DSM 12428 / JCM 9974 / NBRC 100139 / OT-3).